The sequence spans 296 residues: Formamidopyrimidine-DNA glycosylase (296 aa).

The active-site Schiff-base intermediate with DNA is the P2. E3 (proton donor) is an active-site residue. K58 acts as the Proton donor; for beta-elimination activity in catalysis. 3 residues coordinate DNA: H104, R126, and K169. An FPG-type zinc finger spans residues 260–296 (SVYDREGQACGTPGCGGTVARIVQAGRSTFYCAACQK). The active-site Proton donor; for delta-elimination activity is the R286.

This sequence belongs to the FPG family. In terms of assembly, monomer. It depends on Zn(2+) as a cofactor.

The catalysed reaction is Hydrolysis of DNA containing ring-opened 7-methylguanine residues, releasing 2,6-diamino-4-hydroxy-5-(N-methyl)formamidopyrimidine.. It catalyses the reaction 2'-deoxyribonucleotide-(2'-deoxyribose 5'-phosphate)-2'-deoxyribonucleotide-DNA = a 3'-end 2'-deoxyribonucleotide-(2,3-dehydro-2,3-deoxyribose 5'-phosphate)-DNA + a 5'-end 5'-phospho-2'-deoxyribonucleoside-DNA + H(+). Functionally, involved in base excision repair of DNA damaged by oxidation or by mutagenic agents. Acts as a DNA glycosylase that recognizes and removes damaged bases. Has a preference for oxidized purines, such as 7,8-dihydro-8-oxoguanine (8-oxoG). Has AP (apurinic/apyrimidinic) lyase activity and introduces nicks in the DNA strand. Cleaves the DNA backbone by beta-delta elimination to generate a single-strand break at the site of the removed base with both 3'- and 5'-phosphates. This is Formamidopyrimidine-DNA glycosylase from Rhizobium etli (strain ATCC 51251 / DSM 11541 / JCM 21823 / NBRC 15573 / CFN 42).